We begin with the raw amino-acid sequence, 377 residues long: GTP 3',8-cyclase (377 aa).

The interval 1–29 (MTTRLYLSPTPPRNDREGASKSTSASIKH) is disordered. Residues 45 to 271 (RFGRIARDLR…FTLSPAKEPR (227 aa)) form the Radical SAM core domain. A GTP-binding site is contributed by arginine 54. Cysteine 61 and cysteine 65 together coordinate [4Fe-4S] cluster. Tyrosine 67 provides a ligand contact to S-adenosyl-L-methionine. Residue cysteine 68 participates in [4Fe-4S] cluster binding. Arginine 105 contacts GTP. Glycine 109 is an S-adenosyl-L-methionine binding site. Threonine 140 lines the GTP pocket. Position 164 (serine 164) interacts with S-adenosyl-L-methionine. Lysine 201 contributes to the GTP binding site. Residue methionine 235 coordinates S-adenosyl-L-methionine. [4Fe-4S] cluster is bound by residues cysteine 304 and cysteine 307. 309–311 (RSR) is a binding site for GTP. Cysteine 321 contributes to the [4Fe-4S] cluster binding site.

It belongs to the radical SAM superfamily. MoaA family. As to quaternary structure, monomer and homodimer. [4Fe-4S] cluster is required as a cofactor.

It catalyses the reaction GTP + AH2 + S-adenosyl-L-methionine = (8S)-3',8-cyclo-7,8-dihydroguanosine 5'-triphosphate + 5'-deoxyadenosine + L-methionine + A + H(+). It participates in cofactor biosynthesis; molybdopterin biosynthesis. Catalyzes the cyclization of GTP to (8S)-3',8-cyclo-7,8-dihydroguanosine 5'-triphosphate. This is GTP 3',8-cyclase from Corynebacterium glutamicum (strain R).